Here is a 319-residue protein sequence, read N- to C-terminus: Ribose-phosphate pyrophosphokinase (319 aa).

Residues 40 to 42 (DGE) and 99 to 100 (RQ) contribute to the ATP site. Mg(2+) is bound by residues His-134 and Asp-174. Lys-198 is a catalytic residue. Residues Arg-200, Asp-224, and 228–232 (DTAGT) contribute to the D-ribose 5-phosphate site.

It belongs to the ribose-phosphate pyrophosphokinase family. Class I subfamily. In terms of assembly, homohexamer. It depends on Mg(2+) as a cofactor.

The protein localises to the cytoplasm. It carries out the reaction D-ribose 5-phosphate + ATP = 5-phospho-alpha-D-ribose 1-diphosphate + AMP + H(+). It participates in metabolic intermediate biosynthesis; 5-phospho-alpha-D-ribose 1-diphosphate biosynthesis; 5-phospho-alpha-D-ribose 1-diphosphate from D-ribose 5-phosphate (route I): step 1/1. Its function is as follows. Involved in the biosynthesis of the central metabolite phospho-alpha-D-ribosyl-1-pyrophosphate (PRPP) via the transfer of pyrophosphoryl group from ATP to 1-hydroxyl of ribose-5-phosphate (Rib-5-P). The polypeptide is Ribose-phosphate pyrophosphokinase (Xanthomonas campestris pv. campestris (strain ATCC 33913 / DSM 3586 / NCPPB 528 / LMG 568 / P 25)).